Here is a 203-residue protein sequence, read N- to C-terminus: Superoxide dismutase [Mn] (203 aa).

Mn(2+) contacts are provided by H27, H81, D164, and H168.

This sequence belongs to the iron/manganese superoxide dismutase family. As to quaternary structure, homodimer. Requires Mn(2+) as cofactor.

The catalysed reaction is 2 superoxide + 2 H(+) = H2O2 + O2. Functionally, destroys superoxide anion radicals which are normally produced within the cells and which are toxic to biological systems. Partially complements double sodA-sodB deletions in E.coli. The chain is Superoxide dismutase [Mn] from Pseudomonas aeruginosa (strain ATCC 15692 / DSM 22644 / CIP 104116 / JCM 14847 / LMG 12228 / 1C / PRS 101 / PAO1).